Here is a 90-residue protein sequence, read N- to C-terminus: Probable small nuclear ribonucleoprotein F (90 aa).

The 74-residue stretch at 7–80 (NPRPFLQDLV…VLYIKKADEA (74 aa)) folds into the Sm domain.

This sequence belongs to the snRNP Sm proteins family. SmF/LSm6 subfamily.

The protein resides in the nucleus. Its subcellular location is the cytoplasm. Its function is as follows. Plays a role in pre-mRNA splicing as a core component of the spliceosomal U1, U2, U4 and U5 small nuclear ribonucleoproteins (snRNPs), the building blocks of the spliceosome. The polypeptide is Probable small nuclear ribonucleoprotein F (Neurospora crassa (strain ATCC 24698 / 74-OR23-1A / CBS 708.71 / DSM 1257 / FGSC 987)).